The primary structure comprises 180 residues: Calcium-binding protein E (180 aa).

EF-hand domains are found at residues 3 to 38, 40 to 76, 85 to 120, and 139 to 174; these read KVEA…NSNI, DPLA…KKIK, ALRS…DPDF, and RAKS…HPEF. Aspartate 16, aspartate 18, aspartate 20, asparagine 22, and glutamate 27 together coordinate Ca(2+). The Ca(2+) site is built by aspartate 98, aspartate 100, aspartate 102, glutamate 109, aspartate 152, aspartate 154, asparagine 156, lysine 158, and glutamate 163.

The protein is Calcium-binding protein E (cbpE) of Dictyostelium discoideum (Social amoeba).